The chain runs to 65 residues: Bucain (65 aa).

Cystine bridges form between cysteine 3-cysteine 24, cysteine 17-cysteine 42, cysteine 46-cysteine 57, and cysteine 58-cysteine 63.

It belongs to the three-finger toxin family. Short-chain subfamily. Orphan group III sub-subfamily. In terms of tissue distribution, expressed by the venom gland.

Its subcellular location is the secreted. In Bungarus candidus (Malayan krait), this protein is Bucain.